A 341-amino-acid polypeptide reads, in one-letter code: Glyceraldehyde-3-phosphate dehydrogenase 3.1 (341 aa).

NAD(+)-binding positions include Arg-13–Ile-14, Asp-35, and Arg-85. D-glyceraldehyde 3-phosphate contacts are provided by residues Ser-157 to Thr-159, Thr-188, Thr-217 to Gly-218, and Arg-240. Catalysis depends on Cys-158, which acts as the Nucleophile. Asn-322 contacts NAD(+).

Belongs to the glyceraldehyde-3-phosphate dehydrogenase family. As to quaternary structure, homotetramer.

It localises to the cytoplasm. It carries out the reaction D-glyceraldehyde 3-phosphate + phosphate + NAD(+) = (2R)-3-phospho-glyceroyl phosphate + NADH + H(+). It functions in the pathway carbohydrate degradation; glycolysis; pyruvate from D-glyceraldehyde 3-phosphate: step 1/5. This Caenorhabditis briggsae protein is Glyceraldehyde-3-phosphate dehydrogenase 3.1.